We begin with the raw amino-acid sequence, 463 residues long: Oxidoreductase OXR1 (463 aa).

6-hydroxy-FAD is bound by residues glycine 59–serine 63, valine 154, and aspartate 366.

This sequence belongs to the FAD-dependent oxidoreductase family. It depends on 6-hydroxy-FAD as a cofactor.

It functions in the pathway siderophore biosynthesis. Oxidoreductase; part of the gene cluster that mediates the biosynthesis of hydroxamate-containing siderophores that play a critical role in virulence via intracellular iron acquisition during macrophage infection. This chain is Oxidoreductase OXR1, found in Ajellomyces capsulatus (Darling's disease fungus).